The primary structure comprises 187 residues: UPF0301 protein GOX1459 (187 aa).

This sequence belongs to the UPF0301 (AlgH) family.

The chain is UPF0301 protein GOX1459 from Gluconobacter oxydans (strain 621H) (Gluconobacter suboxydans).